The chain runs to 452 residues: Sulfide:quinone oxidoreductase, mitochondrial (452 aa).

FAD contacts are provided by residues 54–55, E77, Q85, and V120; that span reads AG. C204 serves as the catalytic Cysteine persulfide intermediate. C204 and C380 are joined by a disulfide. FAD contacts are provided by residues D337 and 345–348; that span reads KTAA. C380 serves as the catalytic Cysteine persulfide intermediate.

Belongs to the SQRD family. FAD is required as a cofactor.

The protein localises to the mitochondrion. It carries out the reaction ubiquinone-10 + hydrogen sulfide + sulfite + 2 H(+) = ubiquinol-10 + thiosulfate. It catalyses the reaction a quinone + hydrogen sulfide + glutathione + H(+) = S-sulfanylglutathione + a quinol. Its function is as follows. Catalyzes the oxidation of hydrogen sulfide, with the help of a quinone. The chain is Sulfide:quinone oxidoreductase, mitochondrial from Dictyostelium discoideum (Social amoeba).